The chain runs to 424 residues: Enolase (424 aa).

Gln-163 lines the (2R)-2-phosphoglycerate pocket. Catalysis depends on Glu-204, which acts as the Proton donor. Residues Asp-241, Glu-284, and Asp-311 each contribute to the Mg(2+) site. (2R)-2-phosphoglycerate is bound by residues Lys-336, Arg-365, Ser-366, and Lys-387. The active-site Proton acceptor is Lys-336.

Belongs to the enolase family. Requires Mg(2+) as cofactor.

The protein resides in the cytoplasm. The protein localises to the secreted. Its subcellular location is the cell surface. It catalyses the reaction (2R)-2-phosphoglycerate = phosphoenolpyruvate + H2O. It participates in carbohydrate degradation; glycolysis; pyruvate from D-glyceraldehyde 3-phosphate: step 4/5. Its function is as follows. Catalyzes the reversible conversion of 2-phosphoglycerate (2-PG) into phosphoenolpyruvate (PEP). It is essential for the degradation of carbohydrates via glycolysis. The sequence is that of Enolase from Dictyoglomus turgidum (strain DSM 6724 / Z-1310).